Here is a 474-residue protein sequence, read N- to C-terminus: tRNA-2-methylthio-N(6)-dimethylallyladenosine synthase (474 aa).

The region spanning 3–120 (KKLHIKTWGC…LPEMINSVRG (118 aa)) is the MTTase N-terminal domain. Residues Cys-12, Cys-49, Cys-83, Cys-157, Cys-161, and Cys-164 each contribute to the [4Fe-4S] cluster site. The 233-residue stretch at 143–375 (RAEGPTAFVS…QERINQQAMA (233 aa)) folds into the Radical SAM core domain. The TRAM domain occupies 378–441 (RRMLGSTQRI…PNSLRGKVVR (64 aa)).

It belongs to the methylthiotransferase family. MiaB subfamily. As to quaternary structure, monomer. The cofactor is [4Fe-4S] cluster.

The protein localises to the cytoplasm. It carries out the reaction N(6)-dimethylallyladenosine(37) in tRNA + (sulfur carrier)-SH + AH2 + 2 S-adenosyl-L-methionine = 2-methylsulfanyl-N(6)-dimethylallyladenosine(37) in tRNA + (sulfur carrier)-H + 5'-deoxyadenosine + L-methionine + A + S-adenosyl-L-homocysteine + 2 H(+). Catalyzes the methylthiolation of N6-(dimethylallyl)adenosine (i(6)A), leading to the formation of 2-methylthio-N6-(dimethylallyl)adenosine (ms(2)i(6)A) at position 37 in tRNAs that read codons beginning with uridine. This is tRNA-2-methylthio-N(6)-dimethylallyladenosine synthase from Salmonella arizonae (strain ATCC BAA-731 / CDC346-86 / RSK2980).